A 102-amino-acid polypeptide reads, in one-letter code: Ferredoxin, 2Fe-2S (102 aa).

Residues Cys11, Cys24, Cys56, and Cys60 each contribute to the [2Fe-2S] cluster site.

The protein belongs to the 2Fe2S Shethna-type ferredoxin family. [2Fe-2S] cluster serves as cofactor.

Ferredoxins are iron-sulfur proteins that transfer electrons in a wide variety of metabolic reactions. The chain is Ferredoxin, 2Fe-2S from Clostridium pasteurianum.